The primary structure comprises 179 residues: Large ribosomal subunit protein uL6 (179 aa).

The protein belongs to the universal ribosomal protein uL6 family. In terms of assembly, part of the 50S ribosomal subunit.

This protein binds to the 23S rRNA, and is important in its secondary structure. It is located near the subunit interface in the base of the L7/L12 stalk, and near the tRNA binding site of the peptidyltransferase center. The polypeptide is Large ribosomal subunit protein uL6 (Gemmatimonas aurantiaca (strain DSM 14586 / JCM 11422 / NBRC 100505 / T-27)).